The following is a 649-amino-acid chain: MSDSFFKDIPEFLETRVNESLDARSKSIAQFKELGPPDQVNTIKVNAKNPSKEVGTYHFVSGVDASSSASLAAYLNTLSYSLDKSQQWFGKGNAWRVSHGVYCCYNVFSQVDVRVEAKIPGGVDTYAIDENGQKHIVDARMWTEAYMSEVLRSLLYSDDTNSRFAGHRRFNPIPNPDAELRFFEAAEQLFTLGYTLGSSSEVRVPTHVNNHLVRGIFAYLKQTCRYSAALNLFEKLRVSIPEVSVLLAELYLLMDHEVHAVRILHDSLLKQRMSASLLIVQVKFLISKERYDLALICAKRAVHASPSEFATWACLADVYLHLEDFKSALLALNSCPMYTYYERDAYPLPPSARAHLPFPVNFPKEELEVENNAQNGYTVSTEITDPYLARLPSPSLRGTFAKAYEMLTLICAKIGWDELLRVRSAVFVMEEEYRSLNDITEGNASPDQNEVAEESVAEEVVGLDKPETSVGSLPKNATVQSKRLCERWLDNLFMVLYEDLRVFTIWRAEYTHFKSQGLAYRKAPAEWEILGEVAFRLHHRVEAVEAFCACLESMFSFKAWKTLLIIYSEDNNIELVLTAIAKLTLYNYRWYQEYSPFLLEQMKNRIMQDGALKMKSILASTRLDPYILNLIHKLYFEWAIAFQIPGHEL.

It is found in the nucleus. The protein localises to the cytoplasm. This is an uncharacterized protein from Schizosaccharomyces pombe (strain 972 / ATCC 24843) (Fission yeast).